We begin with the raw amino-acid sequence, 130 residues long: Follitropin subunit beta (130 aa).

An N-terminal signal peptide occupies residues 1 to 20 (MMKSIQLCILLWCLRAVCCH). 6 cysteine pairs are disulfide-bonded: Cys22-Cys70, Cys36-Cys85, Cys39-Cys123, Cys47-Cys101, Cys51-Cys103, and Cys106-Cys113. 2 N-linked (GlcNAc...) asparagine glycosylation sites follow: Asn26 and Asn43.

Belongs to the glycoprotein hormones subunit beta family. Heterodimer. The active follitropin is a heterodimer composed of an alpha chain/CGA shared with other hormones and a unique beta chain/FSHB shown here.

The protein localises to the secreted. Its function is as follows. Together with the alpha chain CGA constitutes follitropin, the follicle-stimulating hormone, and provides its biological specificity to the hormone heterodimer. Binds FSHR, a G protein-coupled receptor, on target cells to activate downstream signaling pathways. Follitropin is involved in follicle development and spermatogenesis in reproductive organs. This is Follitropin subunit beta (Fshb) from Rattus norvegicus (Rat).